Here is a 644-residue protein sequence, read N- to C-terminus: Chaperone protein DnaK (644 aa).

Disordered regions lie at residues 490–533 and 570–644; these read QEEA…ELDD and EELQ…EDDA. A compositionally biased stretch (basic and acidic residues) spans 492–513; the sequence is EAEKHKEEDEARRERIEARNEA. Positions 523–533 are enriched in acidic residues; the sequence is LLEENEEELDD. Positions 588-622 are enriched in gly residues; sequence GPGGAGGAAGAGPGGMGGMGGAAGPGGAGGAGPGG. The span at 624-644 shows a compositional bias: acidic residues; it reads DADDEEYVDADFEDVDDEDDA.

This sequence belongs to the heat shock protein 70 family.

Acts as a chaperone. This chain is Chaperone protein DnaK, found in Halorubrum lacusprofundi (strain ATCC 49239 / DSM 5036 / JCM 8891 / ACAM 34).